The sequence spans 360 residues: MGPRALLLLLSGVLILTETRAGSHSLRYFSTAVSRPGLGEPRYLEVGYVDDTQFVQFDSDAPNPRMEPRARWVEQEGPEYWDRNTRNAKGNAQSFRVNLNTLRGYYNQSEAGSHTLQWMSGCDVGPDGALRRGFMQYGYDGRDYLALNEDLRSWTAGETEAQITKRKWEAAGYAEVQRNYLEGECVEWLRRYLENGKDTLLRADPPKAHVTHHPISGREVTLRCWALGFYPEEISLTWQHDGEDQTQDMELVETRPSGDGTFQKWAALVVPSGDEQRYTCRVQHEGLQEPLTLRWEPPQPSFLTMGIIVGLVLLVVTGAVVAGVVICMKKRSGEKGGNYIQASSSDSAQGSDVSLTVPKV.

Residues 1-21 (MGPRALLLLLSGVLILTETRA) form the signal peptide. The segment at 22–111 (GSHSLRYFST…LRGYYNQSEA (90 aa)) is alpha-1. At 22–308 (GSHSLRYFST…QPSFLTMGII (287 aa)) the chain is on the extracellular side. N-linked (GlcNAc...) asparagine glycosylation is present at Asn107. Positions 112–203 (GSHTLQWMSG…ENGKDTLLRA (92 aa)) are alpha-2. 2 disulfides stabilise this stretch: Cys122/Cys185 and Cys224/Cys280. Residues 204–295 (DPPKAHVTHH…GLQEPLTLRW (92 aa)) are alpha-3. An Ig-like C1-type domain is found at 206–292 (PKAHVTHHPI…QHEGLQEPLT (87 aa)). The interval 296–308 (EPPQPSFLTMGII) is connecting peptide. The helical transmembrane segment at 309–328 (VGLVLLVVTGAVVAGVVICM) threads the bilayer. At 329-360 (KKRSGEKGGNYIQASSSDSAQGSDVSLTVPKV) the chain is on the cytoplasmic side. Positions 340–360 (IQASSSDSAQGSDVSLTVPKV) are disordered. Low complexity predominate over residues 341–354 (QASSSDSAQGSDVS). Phosphoserine is present on residues Ser351 and Ser354.

This sequence belongs to the MHC class I family. Heterodimer of an alpha chain and a beta chain (beta-2-microglobulin).

It is found in the membrane. Involved in the presentation of foreign antigens to the immune system. The sequence is that of BOLA class I histocompatibility antigen, alpha chain BL3-6 from Bos taurus (Bovine).